The sequence spans 201 residues: Recombination protein RecR (201 aa).

A C4-type zinc finger spans residues 60 to 75 (CSVCGNVDSCDPCTIC). One can recognise a Toprim domain in the interval 83–178 (STLIVVETVG…RTTRLAHGVP (96 aa)).

This sequence belongs to the RecR family.

Its function is as follows. May play a role in DNA repair. It seems to be involved in an RecBC-independent recombinational process of DNA repair. It may act with RecF and RecO. The chain is Recombination protein RecR from Methylocella silvestris (strain DSM 15510 / CIP 108128 / LMG 27833 / NCIMB 13906 / BL2).